Reading from the N-terminus, the 397-residue chain is Cathepsin E (397 aa).

The signal sequence occupies residues Met1–Gly20. A propeptide spans Ala21–Glu59 (activation peptide). One can recognise a Peptidase A1 domain in the interval Tyr79 to Ala393. The N-linked (GlcNAc...) asparagine glycan is linked to Asn91. Residue Asp97 is part of the active site. 2 disulfide bridges follow: Cys110/Cys115 and Cys273/Cys277. The active site involves Asp282. An N-linked (GlcNAc...) asparagine glycan is attached at Asn323.

Belongs to the peptidase A1 family. As to quaternary structure, homodimer; disulfide-linked. In terms of processing, glycosylated. The nature of the carbohydrate chain varies between cell types. In fibroblasts, the proenzyme contains a high mannose-type oligosaccharide, while the mature enzyme contains a complex-type oligosaccharide. As to expression, expressed abundantly in the stomach, club cells and alveolar macrophages of the lung, brain microglia, spleen and activated B-lymphocytes. Not expressed in resting B-lymphocytes.

The protein resides in the endosome. It carries out the reaction Similar to cathepsin D, but slightly broader specificity.. Its function is as follows. May have a role in immune function. Probably involved in the processing of antigenic peptides during MHC class II-mediated antigen presentation. May play a role in activation-induced lymphocyte depletion in the thymus, and in neuronal degeneration and glial cell activation in the brain. In Mus musculus (Mouse), this protein is Cathepsin E (Ctse).